A 238-amino-acid polypeptide reads, in one-letter code: Probable transcriptional regulatory protein CHU_3516 (238 aa).

This sequence belongs to the TACO1 family.

The protein resides in the cytoplasm. This is Probable transcriptional regulatory protein CHU_3516 from Cytophaga hutchinsonii (strain ATCC 33406 / DSM 1761 / CIP 103989 / NBRC 15051 / NCIMB 9469 / D465).